A 254-amino-acid chain; its full sequence is 3-deoxy-manno-octulosonate cytidylyltransferase (254 aa).

Belongs to the KdsB family.

It is found in the cytoplasm. The catalysed reaction is 3-deoxy-alpha-D-manno-oct-2-ulosonate + CTP = CMP-3-deoxy-beta-D-manno-octulosonate + diphosphate. Its pathway is nucleotide-sugar biosynthesis; CMP-3-deoxy-D-manno-octulosonate biosynthesis; CMP-3-deoxy-D-manno-octulosonate from 3-deoxy-D-manno-octulosonate and CTP: step 1/1. The protein operates within bacterial outer membrane biogenesis; lipopolysaccharide biosynthesis. In terms of biological role, activates KDO (a required 8-carbon sugar) for incorporation into bacterial lipopolysaccharide in Gram-negative bacteria. In Pseudomonas aeruginosa (strain LESB58), this protein is 3-deoxy-manno-octulosonate cytidylyltransferase.